We begin with the raw amino-acid sequence, 156 residues long: 6,7-dimethyl-8-ribityllumazine synthase (156 aa).

Residues F22, 57-59 (AYE), and 81-83 (TVI) contribute to the 5-amino-6-(D-ribitylamino)uracil site. 86-87 (GT) provides a ligand contact to (2S)-2-hydroxy-3-oxobutyl phosphate. The Proton donor role is filled by H89. A 5-amino-6-(D-ribitylamino)uracil-binding site is contributed by F114. R128 serves as a coordination point for (2S)-2-hydroxy-3-oxobutyl phosphate.

It belongs to the DMRL synthase family. In terms of assembly, forms an icosahedral capsid composed of 60 subunits, arranged as a dodecamer of pentamers.

It catalyses the reaction (2S)-2-hydroxy-3-oxobutyl phosphate + 5-amino-6-(D-ribitylamino)uracil = 6,7-dimethyl-8-(1-D-ribityl)lumazine + phosphate + 2 H2O + H(+). It functions in the pathway cofactor biosynthesis; riboflavin biosynthesis; riboflavin from 2-hydroxy-3-oxobutyl phosphate and 5-amino-6-(D-ribitylamino)uracil: step 1/2. Functionally, catalyzes the formation of 6,7-dimethyl-8-ribityllumazine by condensation of 5-amino-6-(D-ribitylamino)uracil with 3,4-dihydroxy-2-butanone 4-phosphate. This is the penultimate step in the biosynthesis of riboflavin. This Mannheimia succiniciproducens (strain KCTC 0769BP / MBEL55E) protein is 6,7-dimethyl-8-ribityllumazine synthase.